The sequence spans 445 residues: Rab GDP dissociation inhibitor beta (445 aa).

N-acetylmethionine is present on M1. K57 carries the post-translational modification N6-succinyllysine. N6-acetyllysine is present on K112. S130 carries the post-translational modification Phosphoserine. K269 bears the N6-acetyllysine mark. S382 is modified (phosphoserine).

This sequence belongs to the Rab GDI family. Interacts with RHOH. Interacts with the GDP-bound inactive forms of RAB3A, RAB3B, RAB3C, RAB5A, RAB5B, RAB5C, RAB8A, RAB8B, RAB10, RAB12, RAB35, and RAB43; binds RAB3D to a lesser extent. Interacts with DZIP1; this interaction negatively regulates the interaction of GDI2 with GDP-bound RAB8A. In terms of tissue distribution, ubiquitously expressed.

The protein localises to the cytoplasm. It localises to the membrane. It is found in the golgi apparatus. The protein resides in the trans-Golgi network. In terms of biological role, GDP-dissociation inhibitor preventing the GDP to GTP exchange of most Rab proteins. By keeping these small GTPases in their inactive GDP-bound form regulates intracellular membrane trafficking. Negatively regulates protein transport to the cilium and ciliogenesis through the inhibition of RAB8A. The polypeptide is Rab GDP dissociation inhibitor beta (GDI2) (Bos taurus (Bovine)).